The primary structure comprises 163 residues: Protein GOLVEN 3 (163 aa).

Positions 1–20 are cleaved as a signal peptide; that stretch reads MMRFTIIVIAFLLIIQSLEE. A propeptide spanning residues 21 to 141 is cleaved from the precursor; sequence EHILVYAHEG…MEKLARLLRD (121 aa). Residue Y143 is modified to Sulfotyrosine. The interval 144-163 is disordered; it reads PIYSKPRRKPPVNNRAPDKF. The residue at position 154 (P154) is a Hydroxyproline. Residues 158–163 constitute a propeptide that is removed on maturation; sequence RAPDKF.

This sequence belongs to the RGF family. As to quaternary structure, binds to LRR receptor-like serine/threonine-protein kinases RGI1, RGI2 and RGI3 to trigger their dimerization with SERK proteins and subsequent signaling. As to expression, expressed in roots, specifically in the root apical meristem (RAM).

The protein resides in the secreted. Its function is as follows. Signaling peptide (root growth factor) required during root gravitropism in a PIN2-traffic dependent manner, thus influencing the formation of auxin gradients. Maintains the postembryonic root stem cell niche. In Arabidopsis thaliana (Mouse-ear cress), this protein is Protein GOLVEN 3.